Consider the following 468-residue polypeptide: Serine/threonine-protein phosphatase 2A 55 kDa regulatory subunit B beta isoform (468 aa).

7 WD repeats span residues 47–86 (SSAD…KNQP), 112–153 (EIEE…KRPE), 196–234 (AHTY…RSFN), 245–285 (ELTE…LCDK), 304–342 (EIIS…RPIE), 359–400 (ENDC…DVTL), and 435–468 (DFSK…DKVN).

It belongs to the phosphatase 2A regulatory subunit B family. As to quaternary structure, PP2A consists of a common heterodimeric core enzyme, composed of a 36 kDa catalytic subunit (subunit C) and a 65 kDa constant regulatory subunit (PR65 or subunit A), that associates with a variety of regulatory subunits.

Its subcellular location is the cytoplasm. The protein localises to the cytoskeleton. The protein resides in the membrane. Functionally, the B regulatory subunit might modulate substrate selectivity and catalytic activity, and might also direct the localization of the catalytic enzyme to a particular subcellular compartment. Negatively controls the initiation of oocyte maturation. This is Serine/threonine-protein phosphatase 2A 55 kDa regulatory subunit B beta isoform (ppp2r2b) from Xenopus laevis (African clawed frog).